A 244-amino-acid polypeptide reads, in one-letter code: Krueppel-like factor 9 (244 aa).

Disordered stretches follow at residues 24–51 (VPEH…GDPG) and 80–142 (SVCS…SEKR). Positions 32–51 (DAERLRLPEREVTKEHGDPG) are enriched in basic and acidic residues. Phosphoserine is present on Ser-122. 3 consecutive C2H2-type zinc fingers follow at residues 143-167 (HKCP…YRVH), 173-197 (FPCT…YRTH), and 203-225 (FRCP…ARRH).

The protein belongs to the Sp1 C2H2-type zinc-finger protein family. As to quaternary structure, interacts with ZZEF1.

The protein localises to the nucleus. Its function is as follows. Transcription factor that binds to GC box promoter elements. Selectively activates mRNA synthesis from genes containing tandem repeats of GC boxes but represses genes with a single GC box. Acts as an epidermal circadian transcription factor regulating keratinocyte proliferation. This is Krueppel-like factor 9 (KLF9) from Sus scrofa (Pig).